The sequence spans 207 residues: MINRKSFDDQIKLDHNITYLSGSDEAGRGCLAGPLVVASVILKPDYFNPLIKDSKKLNPKTRQVLFDEIIKNCLDYQIMIISSKQVDELNPLQASLLGFKTTISNLKITPDLALIDGNQNINLENIKTLSIIKGDDNSFSIACSSILAKVTRDKILDQYDQIYPNYGFKSHKGYCTKKHLLAIQKYGVLDIHRKSYKPIKKISKETS.

The RNase H type-2 domain maps to 18–207 (TYLSGSDEAG…PIKKISKETS (190 aa)). A divalent metal cation is bound by residues Asp24, Glu25, and Asp116.

It belongs to the RNase HII family. It depends on Mn(2+) as a cofactor. The cofactor is Mg(2+).

The protein resides in the cytoplasm. It carries out the reaction Endonucleolytic cleavage to 5'-phosphomonoester.. Functionally, endonuclease that specifically degrades the RNA of RNA-DNA hybrids. The protein is Ribonuclease HII of Mycoplasma capricolum subsp. capricolum (strain California kid / ATCC 27343 / NCTC 10154).